The following is a 200-amino-acid chain: 3-isopropylmalate dehydratase small subunit (200 aa).

Belongs to the LeuD family. LeuD type 1 subfamily. In terms of assembly, heterodimer of LeuC and LeuD.

The catalysed reaction is (2R,3S)-3-isopropylmalate = (2S)-2-isopropylmalate. Its pathway is amino-acid biosynthesis; L-leucine biosynthesis; L-leucine from 3-methyl-2-oxobutanoate: step 2/4. In terms of biological role, catalyzes the isomerization between 2-isopropylmalate and 3-isopropylmalate, via the formation of 2-isopropylmaleate. The sequence is that of 3-isopropylmalate dehydratase small subunit from Erythrobacter litoralis (strain HTCC2594).